An 82-amino-acid polypeptide reads, in one-letter code: Small ribosomal subunit protein uS17 (82 aa).

The protein belongs to the universal ribosomal protein uS17 family. As to quaternary structure, part of the 30S ribosomal subunit.

Functionally, one of the primary rRNA binding proteins, it binds specifically to the 5'-end of 16S ribosomal RNA. The protein is Small ribosomal subunit protein uS17 of Pelobacter propionicus (strain DSM 2379 / NBRC 103807 / OttBd1).